The following is a 669-amino-acid chain: DNA ligase (669 aa).

Residues 34 to 38, 83 to 84, and Glu114 contribute to the NAD(+) site; these read DAEYD and SL. The N6-AMP-lysine intermediate role is filled by Lys116. The NAD(+) site is built by Arg137, Glu171, Lys287, and Lys311. Cys405, Cys408, Cys423, and Cys428 together coordinate Zn(2+). In terms of domain architecture, BRCT spans 591–669; sequence NVESYFAGKT…EERFLQELNK (79 aa).

It belongs to the NAD-dependent DNA ligase family. LigA subfamily. The cofactor is Mg(2+). Requires Mn(2+) as cofactor.

The catalysed reaction is NAD(+) + (deoxyribonucleotide)n-3'-hydroxyl + 5'-phospho-(deoxyribonucleotide)m = (deoxyribonucleotide)n+m + AMP + beta-nicotinamide D-nucleotide.. Its function is as follows. DNA ligase that catalyzes the formation of phosphodiester linkages between 5'-phosphoryl and 3'-hydroxyl groups in double-stranded DNA using NAD as a coenzyme and as the energy source for the reaction. It is essential for DNA replication and repair of damaged DNA. The sequence is that of DNA ligase from Bacillus mycoides (strain KBAB4) (Bacillus weihenstephanensis).